Consider the following 482-residue polypeptide: Proline--tRNA ligase (482 aa).

It belongs to the class-II aminoacyl-tRNA synthetase family. ProS type 3 subfamily. Homodimer.

It localises to the cytoplasm. It carries out the reaction tRNA(Pro) + L-proline + ATP = L-prolyl-tRNA(Pro) + AMP + diphosphate. Its function is as follows. Catalyzes the attachment of proline to tRNA(Pro) in a two-step reaction: proline is first activated by ATP to form Pro-AMP and then transferred to the acceptor end of tRNA(Pro). In Thermofilum pendens (strain DSM 2475 / Hrk 5), this protein is Proline--tRNA ligase.